A 208-amino-acid chain; its full sequence is Octanoyltransferase (208 aa).

In terms of domain architecture, BPL/LPL catalytic spans 31 to 208 (GSEREMVWLL…LKKEFYKVFA (178 aa)). Substrate is bound by residues 70–77 (RGGKYSYH), 142–144 (AFG), and 155–157 (GVA). Cys-173 functions as the Acyl-thioester intermediate in the catalytic mechanism.

Belongs to the LipB family.

Its subcellular location is the cytoplasm. The enzyme catalyses octanoyl-[ACP] + L-lysyl-[protein] = N(6)-octanoyl-L-lysyl-[protein] + holo-[ACP] + H(+). It participates in protein modification; protein lipoylation via endogenous pathway; protein N(6)-(lipoyl)lysine from octanoyl-[acyl-carrier-protein]: step 1/2. Its function is as follows. Catalyzes the transfer of endogenously produced octanoic acid from octanoyl-acyl-carrier-protein onto the lipoyl domains of lipoate-dependent enzymes. Lipoyl-ACP can also act as a substrate although octanoyl-ACP is likely to be the physiological substrate. This is Octanoyltransferase from Anaplasma phagocytophilum (strain HZ).